The chain runs to 167 residues: Insertion element IS1 4 protein InsB (167 aa).

This sequence belongs to the transposase 27 family.

Its function is as follows. Absolutely required for transposition of IS1. The sequence is that of Insertion element IS1 4 protein InsB (insB4) from Escherichia coli (strain K12).